Here is a 404-residue protein sequence, read N- to C-terminus: DNA replication and repair protein RecF (404 aa).

30–37 (GSNGQGKT) contacts ATP.

The protein belongs to the RecF family.

The protein resides in the cytoplasm. In terms of biological role, the RecF protein is involved in DNA metabolism; it is required for DNA replication and normal SOS inducibility. RecF binds preferentially to single-stranded, linear DNA. It also seems to bind ATP. In Clavibacter michiganensis subsp. michiganensis (strain NCPPB 382), this protein is DNA replication and repair protein RecF.